Consider the following 304-residue polypeptide: UDP-N-acetylenolpyruvoylglucosamine reductase (304 aa).

Residues 28 to 193 (KTGGPADYLA…LTATFALTPG (166 aa)) form the FAD-binding PCMH-type domain. Arginine 172 is an active-site residue. The Proton donor role is filled by serine 222. Glutamate 292 is an active-site residue.

The protein belongs to the MurB family. It depends on FAD as a cofactor.

The protein resides in the cytoplasm. The catalysed reaction is UDP-N-acetyl-alpha-D-muramate + NADP(+) = UDP-N-acetyl-3-O-(1-carboxyvinyl)-alpha-D-glucosamine + NADPH + H(+). Its pathway is cell wall biogenesis; peptidoglycan biosynthesis. Functionally, cell wall formation. In Levilactobacillus brevis (strain ATCC 367 / BCRC 12310 / CIP 105137 / JCM 1170 / LMG 11437 / NCIMB 947 / NCTC 947) (Lactobacillus brevis), this protein is UDP-N-acetylenolpyruvoylglucosamine reductase.